Here is a 456-residue protein sequence, read N- to C-terminus: MLPSQSPAIFTVSRLNQTVRLLLEHEMGQVWISGEISNFTQPASGHWYFTLKDDTAQVRCAMFRNSNRRVTFRPQHGQQVLVRANITLYEPRGDYQIIVESMQPAGEGLLQQKYEQLKAKLQAEGLFDQQYKKPLPSPAHCVGVITSKTGAALHDILHVLKRRDPSLPVIIYPTSVQGDDAPGQIVRAIELANQRNECDVLIVGRGGGSLEDLWSFNDERVARAIFASRIPVVSAVGHETDVTIADFVADLRAPTPSAAAEVVSRNQQELLRQVQSSRQRLEMAMDYYLANRTRRFTQIHHRLQQQHPQLRLARQQTMLERLQKRMSFALENQLKRAGQQQQRLTQRLNQQNPQPKIHRTQTRIQQLEYRLAEILRAQLSATRERFGNAVTHLEAVSPLSTLARGYSVTTATDGNVLKKVKQVKAGEMLTTRLEDGWIESEVKNIQPVKKSRKKVH.

It belongs to the XseA family. In terms of assembly, heterooligomer composed of large and small subunits.

Its subcellular location is the cytoplasm. The enzyme catalyses Exonucleolytic cleavage in either 5'- to 3'- or 3'- to 5'-direction to yield nucleoside 5'-phosphates.. Its function is as follows. Bidirectionally degrades single-stranded DNA into large acid-insoluble oligonucleotides, which are then degraded further into small acid-soluble oligonucleotides. This Shigella flexneri serotype 5b (strain 8401) protein is Exodeoxyribonuclease 7 large subunit.